The chain runs to 634 residues: MKGIKKSPTEESLYLEYSHQTEGCIFPLHTSVTLFLLSYCECKVFNVCLVLTEESTDTSDTSFLKEALPQDLEIQVISKQALPPIVQNCCLPAVVDQPDVFCRAGLAVVLRHIIQKSYEAEPSRKEILELLGFKKTCLKACAEVSQWTRLCELTIPLAVENFLQESSEHPPTIPEEILELERKLSEPVRVHNDDKLRRQKLKQQKAAGSEPPSGKGKAKSKASAQKTPKDLAAPSKSLELKVAFSKLTVQEDAAASNREPSHIRKAKAADLPPLEHVFAEGLYFTLADIVLLPCIHHFLVIICKKFSEKLEQFPLLTSWYQRIQEVPKVKTAASKCGIYFLYLPELLNSARKQPVNSDEVAAVDEQSDPLFIGGPRPTMTKLMEKGIEAMFSPHPCPAWTLDWSSLPAAVSPKEGKMSTDRALRKQQQLNNLVYLVLNQAKPGDRIVDFCSGGGHVGIVLAHMLPSCQVTLIENKELSLIRAKKRSDELGLSNIWFIQANMEYFTGMFNIGVALHACGVATDMVIEHCIQTRASFITCPCCYGFIQNTSKFNFPKSEKFKKTLSYKEHMLLCRFADQTAVQLPPERRLIGKQCMGLVDLDRAAAAGEHGYSVQVISMEPESCSPKNNMIVGVPL.

The 203-residue stretch at 131–333 folds into the GST C-terminal domain; that stretch reads LGFKKTCLKA…QEVPKVKTAA (203 aa). Positions 189–233 are disordered; it reads RVHNDDKLRRQKLKQQKAAGSEPPSGKGKAKSKASAQKTPKDLAA. Positions 204-226 are enriched in low complexity; sequence QKAAGSEPPSGKGKAKSKASAQK.

This sequence belongs to the GSTCD family.

The protein resides in the cytoplasm. The chain is Glutathione S-transferase C-terminal domain-containing protein (Gstcd) from Mus musculus (Mouse).